A 1588-amino-acid polypeptide reads, in one-letter code: Autotransporter adhesin EhaG (1588 aa).

The signal sequence occupies residues 1 to 53; sequence MNKIFKVIWNPATGNYTVTSETAKSRGKKSGRSKLLISALVAGGMLSSFGALA. A surface exposed passenger domain region spans residues 54-1499; it reads NAGNDNGQGV…QETKQYTDQR (1446 aa). Residues 1500–1588 form a translocator domain region; the sequence is MVEMDNKLSK…SAALGAGIQW (89 aa). The next 4 membrane-spanning stretches (beta stranded) occupy residues 1534–1544, 1548–1558, 1567–1573, and 1577–1588; these read GASMASIGGGT, ESAVALGVSMV, KLQGSTN, and EYSAALGAGIQW.

This sequence belongs to the autotransporter-2 (AT-2) (TC 1.B.40) family. Homotrimer.

It localises to the cell surface. The protein localises to the cell outer membrane. Mediates aggregation, biofilm formation and adhesion to a range of extracellular matrix (ECM) proteins, such as fibronectin, fibrinogen, laminin and collagen types I, II, III, and V. Mediates adhesion to intestinal epithelial cells. The sequence is that of Autotransporter adhesin EhaG from Escherichia coli O157:H7.